The primary structure comprises 270 residues: UPF0354 protein BcerKBAB4_4524 (270 aa).

The protein belongs to the UPF0354 family.

This is UPF0354 protein BcerKBAB4_4524 from Bacillus mycoides (strain KBAB4) (Bacillus weihenstephanensis).